A 405-amino-acid chain; its full sequence is Pre-mRNA-splicing factor cwc-24 (405 aa).

2 disordered regions span residues 1–114 (MADT…NTIY) and 162–184 (TKKK…DGTY). Residues 15-29 (EPTTATPTAPIAPVA) show a composition bias toward low complexity. The span at 31-46 (FKKRGAKGKANLRKRP) shows a compositional bias: basic residues. The span at 56 to 70 (SDDDSSDFESSEDEA) shows a compositional bias: acidic residues. The span at 74-83 (RIKRRKKNHH) shows a compositional bias: basic residues. The C3H1-type zinc-finger motif lies at 221-249 (DMAPDVCKDYKQTGFCGFGDNCKFLHARE). An RING-type zinc finger spans residues 310-349 (CIICRGPYSNSPVVTRCGHYFCEACALKRYRKDPSCAACG). Over residues 370–386 (KARAERLRREARERGEE) the composition is skewed to basic and acidic residues. Residues 370–405 (KARAERLRREARERGEEVSEEEDEGEDEGEGAEGSD) form a disordered region. Residues 387–405 (VSEEEDEGEDEGEGAEGSD) are compositionally biased toward acidic residues.

Belongs to the CWC24 family. In terms of assembly, associated with the spliceosome.

The protein resides in the nucleus. Functionally, involved in pre-mRNA splicing. This Neurospora crassa (strain ATCC 24698 / 74-OR23-1A / CBS 708.71 / DSM 1257 / FGSC 987) protein is Pre-mRNA-splicing factor cwc-24 (cwc-24).